The primary structure comprises 433 residues: Glutamate-1-semialdehyde 2,1-aminomutase (433 aa).

The residue at position 273 (Lys-273) is an N6-(pyridoxal phosphate)lysine.

This sequence belongs to the class-III pyridoxal-phosphate-dependent aminotransferase family. HemL subfamily. As to quaternary structure, homodimer. It depends on pyridoxal 5'-phosphate as a cofactor.

It localises to the cytoplasm. The catalysed reaction is (S)-4-amino-5-oxopentanoate = 5-aminolevulinate. The protein operates within porphyrin-containing compound metabolism; protoporphyrin-IX biosynthesis; 5-aminolevulinate from L-glutamyl-tRNA(Glu): step 2/2. Its pathway is porphyrin-containing compound metabolism; chlorophyll biosynthesis. This chain is Glutamate-1-semialdehyde 2,1-aminomutase, found in Rippkaea orientalis (strain PCC 8801 / RF-1) (Cyanothece sp. (strain PCC 8801)).